The primary structure comprises 120 residues: Large ribosomal subunit protein uL18 (120 aa).

It belongs to the universal ribosomal protein uL18 family. Part of the 50S ribosomal subunit; part of the 5S rRNA/L5/L18/L25 subcomplex. Contacts the 5S and 23S rRNAs.

Functionally, this is one of the proteins that bind and probably mediate the attachment of the 5S RNA into the large ribosomal subunit, where it forms part of the central protuberance. In Rhizobium johnstonii (strain DSM 114642 / LMG 32736 / 3841) (Rhizobium leguminosarum bv. viciae), this protein is Large ribosomal subunit protein uL18.